The primary structure comprises 248 residues: Orotidine 5'-phosphate decarboxylase (248 aa).

Substrate contacts are provided by residues Asp-22, Lys-44, 71-80 (DLKFHDIPNT), Thr-131, Arg-192, Gln-201, Gly-221, and Arg-222. The Proton donor role is filled by Lys-73.

It belongs to the OMP decarboxylase family. Type 1 subfamily. In terms of assembly, homodimer.

It catalyses the reaction orotidine 5'-phosphate + H(+) = UMP + CO2. It participates in pyrimidine metabolism; UMP biosynthesis via de novo pathway; UMP from orotate: step 2/2. Its function is as follows. Catalyzes the decarboxylation of orotidine 5'-monophosphate (OMP) to uridine 5'-monophosphate (UMP). This chain is Orotidine 5'-phosphate decarboxylase, found in Photorhabdus laumondii subsp. laumondii (strain DSM 15139 / CIP 105565 / TT01) (Photorhabdus luminescens subsp. laumondii).